Here is a 125-residue protein sequence, read N- to C-terminus: Small ribosomal subunit protein uS13 (125 aa).

The protein belongs to the universal ribosomal protein uS13 family. As to quaternary structure, part of the 30S ribosomal subunit. Forms a loose heterodimer with protein S19. Forms two bridges to the 50S subunit in the 70S ribosome.

Located at the top of the head of the 30S subunit, it contacts several helices of the 16S rRNA. In the 70S ribosome it contacts the 23S rRNA (bridge B1a) and protein L5 of the 50S subunit (bridge B1b), connecting the 2 subunits; these bridges are implicated in subunit movement. Contacts the tRNAs in the A and P-sites. The protein is Small ribosomal subunit protein uS13 of Rickettsia akari (strain Hartford).